The chain runs to 703 residues: Leucine zipper putative tumor suppressor 3 (703 aa).

Disordered regions lie at residues 1-22 (MAPADLASEGPKLEDPPAPHLF), 40-190 (RADP…SEPL), and 204-347 (FHSM…PPSP). Positions 96–107 (GSFPGPRSSGSG) are enriched in low complexity. Residues 109 to 124 (NRERPGPGRYPSEDKV) show a composition bias toward basic and acidic residues. The span at 205-218 (HSMQNLCPPQTNGT) shows a compositional bias: polar residues. Residues 251–268 (DSGRNSLTSLPTYSSSYS) show a composition bias toward low complexity. The segment covering 290 to 299 (SSGGGGGGSG) has biased composition (gly residues). Low complexity predominate over residues 304–324 (GTSDSGRASSKSGSSSSMGRS). A compositionally biased stretch (gly residues) spans 325 to 336 (GHLGSGEGGNGG). Residues Ser346 and Ser348 each carry the phosphoserine modification. 2 coiled-coil regions span residues 348–526 (SALI…SLRD) and 600–669 (TRAL…RLRE). A disordered region spans residues 665–703 (RRLRERGAAGGSRTPTPQHGEEEKAWTPSRLERIESTEI). Residues 683-703 (HGEEEKAWTPSRLERIESTEI) show a composition bias toward basic and acidic residues.

Belongs to the LZTS3 family. Interacts (via C-terminus) with SHANK3 (via PDZ domain). Interacts (via coiled coil) with SIPA1L1. Can form homooligomers. As to expression, detected in brain, with highest expression in brain cortex, caudate putamen, cerebellum and hippocampus. Detected in neuropil (at protein level). Detected in brain and kidney.

It localises to the synapse. The protein resides in the postsynaptic density. Its subcellular location is the cell projection. It is found in the dendritic spine. The protein localises to the dendrite. It localises to the cytoplasm. The protein resides in the cytoskeleton. May be involved in promoting the maturation of dendritic spines, probably via regulating SIPA1L1 levels at the postsynaptic density of synapses. The chain is Leucine zipper putative tumor suppressor 3 from Rattus norvegicus (Rat).